Reading from the N-terminus, the 144-residue chain is Large ribosomal subunit protein uL13 (144 aa).

It belongs to the universal ribosomal protein uL13 family. As to quaternary structure, part of the 50S ribosomal subunit.

In terms of biological role, this protein is one of the early assembly proteins of the 50S ribosomal subunit, although it is not seen to bind rRNA by itself. It is important during the early stages of 50S assembly. The chain is Large ribosomal subunit protein uL13 from Moorella thermoacetica (strain ATCC 39073 / JCM 9320).